Reading from the N-terminus, the 128-residue chain is MAASVLGSLLRTFRQAVPPSASGQVRGYYVDWRMLRDLKRRKMAYEYADERLRINSLRKNTILPKDLQEMAGDEIAALPRDSCPVRIRNRCVMTSRPRGVKRRWRLSRIVFRHLADHGLLSGVQRAIW.

It belongs to the universal ribosomal protein uS14 family. As to quaternary structure, component of the mitochondrial ribosome small subunit (28S) which comprises a 12S rRNA and about 30 distinct proteins. Interacts with LIAT1.

The protein resides in the mitochondrion. The polypeptide is Small ribosomal subunit protein uS14m (Mrps14) (Mus musculus (Mouse)).